A 205-amino-acid chain; its full sequence is Putative glutamine amidotransferase-like protein L716 (205 aa).

The Glutamine amidotransferase type-1 domain occupies 1–176 (MLLIIQNGYI…SNHIESYDYA (176 aa)). Catalysis depends on for GATase activity residues Cys82, His155, and Asp157.

The sequence is that of Putative glutamine amidotransferase-like protein L716 from Acanthamoeba polyphaga mimivirus (APMV).